The following is a 546-amino-acid chain: Chaperonin GroEL 1 (546 aa).

Residues 30-33, lysine 51, 87-91, glycine 415, 479-481, and aspartate 495 contribute to the ATP site; these read TLGP, DGTTT, and NAA. Residues 526-546 form a disordered region; that stretch reads KEDAPMPGGMPGGMGGMGMDM. Residues 534–546 show a composition bias toward gly residues; sequence GMPGGMGGMGMDM.

This sequence belongs to the chaperonin (HSP60) family. Forms a cylinder of 14 subunits composed of two heptameric rings stacked back-to-back. Interacts with the co-chaperonin GroES.

Its subcellular location is the cytoplasm. The enzyme catalyses ATP + H2O + a folded polypeptide = ADP + phosphate + an unfolded polypeptide.. Functionally, together with its co-chaperonin GroES, plays an essential role in assisting protein folding. The GroEL-GroES system forms a nano-cage that allows encapsulation of the non-native substrate proteins and provides a physical environment optimized to promote and accelerate protein folding. This is Chaperonin GroEL 1 from Burkholderia ambifaria (strain ATCC BAA-244 / DSM 16087 / CCUG 44356 / LMG 19182 / AMMD) (Burkholderia cepacia (strain AMMD)).